Consider the following 129-residue polypeptide: Azurin-2 (129 aa).

A Plastocyanin-like domain is found at 1 to 129 (AQCEATVESN…MMKGTLKLGS (129 aa)). C3 and C26 are joined by a disulfide. Cu cation is bound by residues H46, C112, H117, and M121.

It localises to the periplasm. Transfers electrons from cytochrome c551 to cytochrome oxidase. The polypeptide is Azurin-2 (Alcaligenes xylosoxydans xylosoxydans (Achromobacter xylosoxidans)).